The following is an 86-amino-acid chain: Putative membrane protein insertion efficiency factor (86 aa).

Positions 67–86 (LHEGGDDPVPPVKNNDNREH) are disordered.

Belongs to the UPF0161 family.

It is found in the cell inner membrane. Could be involved in insertion of integral membrane proteins into the membrane. The chain is Putative membrane protein insertion efficiency factor from Photorhabdus laumondii subsp. laumondii (strain DSM 15139 / CIP 105565 / TT01) (Photorhabdus luminescens subsp. laumondii).